The chain runs to 295 residues: sn-glycerol-3-phosphate transport system permease protein UgpA (295 aa).

At 1 to 11 (MSSSRPVFRSR) the chain is on the cytoplasmic side. A helical membrane pass occupies residues 12-32 (WLPYLLVAPQLVITVIFFIWP). The Periplasmic segment spans residues 33–80 (AGEALWYSLQSVDPFGFSSQFVGLENFVALFHDSYYLDAFWTTIKFSA). An ABC transmembrane type-1 domain is found at 76-284 (IKFSALVTFS…FLVIILTVVQ (209 aa)). A helical membrane pass occupies residues 81–101 (LVTFSGLLVSLFFAALVDYVV). Residues 102–109 (RGSRFYQT) lie on the Cytoplasmic side of the membrane. The helical transmembrane segment at 110-130 (LMLLPYAVAPAVAAVLWIFLF) threads the bilayer. Residues 131 to 157 (NPGRGLITHFLGEFGYDWNHAQNSGQA) are Periplasmic-facing. A helical transmembrane segment spans residues 158-178 (MFLVVFASVWKQISYNFLFFF). Topologically, residues 179–207 (AALQSIPRSLVEAAAIDGAGPIRRFFRLS) are cytoplasmic. Residues 208–228 (LPLIAPVSFFLLVVNLVYAFF) form a helical membrane-spanning segment. Topologically, residues 229 to 262 (DTFPVIDAATAGGPVQATTTLIYKIYREGFTGLD) are periplasmic. A helical transmembrane segment spans residues 263-283 (LSASAAQSVVLMFLVIILTVV). The Cytoplasmic portion of the chain corresponds to 284–295 (QFRYVESKVRYQ).

The protein belongs to the binding-protein-dependent transport system permease family. UgpAE subfamily. As to quaternary structure, the complex is composed of two ATP-binding proteins (UgpC), two transmembrane proteins (UgpA and UgpE) and a solute-binding protein (UgpB).

Its subcellular location is the cell inner membrane. In terms of biological role, part of the ABC transporter complex UgpBAEC involved in sn-glycerol-3-phosphate (G3P) import. Probably responsible for the translocation of the substrate across the membrane. The sequence is that of sn-glycerol-3-phosphate transport system permease protein UgpA (ugpA) from Salmonella typhimurium (strain LT2 / SGSC1412 / ATCC 700720).